A 111-amino-acid polypeptide reads, in one-letter code: Kalata-B7 (111 aa).

Residues 1-28 (MAKFTNCLALCLLLAAVVGAFGVELSEA) form the signal peptide. The propeptide occupies 29–75 (DKSAVVNEIAEKMALQEMLDGVDKLFLRKMKSSETTLTMFLKEMQLK). The cyclopeptide (Gly-Asn) cross-link spans 76 to 104 (GLPVCGETCTLGTCYTQGCTCSWPICKRN). Intrachain disulfides connect Cys-80-Cys-94, Cys-84-Cys-96, and Cys-89-Cys-101. A propeptide spanning residues 105–111 (GLPDVAA) is cleaved from the precursor.

Kalata-B7 is a cyclic peptide.

Its function is as follows. Probably participates in a plant defense mechanism. Has hemolytic activity. In Oldenlandia affinis, this protein is Kalata-B7 (OAK3).